Consider the following 180-residue polypeptide: NADH-quinone oxidoreductase subunit I (180 aa).

4Fe-4S ferredoxin-type domains lie at 48–80 and 90–119; these read IVLT…LQKA and EFFR…LTPD. C60, C63, C66, C70, C99, C102, C105, and C109 together coordinate [4Fe-4S] cluster. Residues 161–174 show a composition bias toward basic and acidic residues; that stretch reads KPKGDAEHEAKPID. The segment at 161–180 is disordered; it reads KPKGDAEHEAKPIDVKSLLP.

The protein belongs to the complex I 23 kDa subunit family. As to quaternary structure, NDH-1 is composed of 14 different subunits. Subunits NuoA, H, J, K, L, M, N constitute the membrane sector of the complex. Requires [4Fe-4S] cluster as cofactor.

The protein localises to the cell inner membrane. It catalyses the reaction a quinone + NADH + 5 H(+)(in) = a quinol + NAD(+) + 4 H(+)(out). NDH-1 shuttles electrons from NADH, via FMN and iron-sulfur (Fe-S) centers, to quinones in the respiratory chain. The immediate electron acceptor for the enzyme in this species is believed to be ubiquinone. Couples the redox reaction to proton translocation (for every two electrons transferred, four hydrogen ions are translocated across the cytoplasmic membrane), and thus conserves the redox energy in a proton gradient. In Aeromonas salmonicida (strain A449), this protein is NADH-quinone oxidoreductase subunit I.